Consider the following 344-residue polypeptide: Plastoglobule-localized metallopeptidase 48, chloroplastic (344 aa).

Residues 1–47 (MAVSVSAPVLSLCYNQSGELSRSLGYRLPKKVGFSSGRRSVSYIGFG) constitute a chloroplast transit peptide. A run of 2 helical transmembrane segments spans residues 102-122 (LLGS…SVLV) and 169-189 (FIVV…QAVL). Position 191 (histidine 191) interacts with Zn(2+). Glutamate 192 is a catalytic residue. Histidine 195 provides a ligand contact to Zn(2+). Residues 201-221 (GVWLTFANILTLGAYTVPAFG) traverse the membrane as a helical segment. Glutamate 240 contacts Zn(2+). A helical membrane pass occupies residues 256–272 (VVVSVLMKLAGGCPSIA).

It belongs to the peptidase M48 family. M48D subfamily. As to quaternary structure, interacts with plastoglobule (PG) core proteins ABC1K3, PES1 and CCD4. Requires Zn(2+) as cofactor. In terms of tissue distribution, mostly expressed in flowers (e.g. sepals, petals and stamen), seeds, leaves and cotyledons.

It localises to the plastid. Its subcellular location is the chloroplast. The protein localises to the plastoglobule. The protein resides in the chloroplast membrane. In terms of biological role, metalloendopeptidase with a Zn-dependent proteolytic activity and substrate cleavage upstream of hydrophobic residues. Positive regulator of senescence, probably by degrading CCD4, thus participating in the controlled removal of carotenoids from the thylakoid membrane during the senescence process. The polypeptide is Plastoglobule-localized metallopeptidase 48, chloroplastic (Arabidopsis thaliana (Mouse-ear cress)).